Consider the following 164-residue polypeptide: MSNVTFKNDPVTLLGAEKKVGDSAPDFTVLANDLSKKHLSDYKGKVKVISVVPSIDTGVCSEQTRRFNQEATNLENVQILTISMDLPFAQKRWCAANGIDRVDTLSDHREADFGQKYGVIIEELRLLSRAVFVVDENDKITYVEYLSEVSNHPDYEAVLSHLNK.

The region spanning 18 to 164 is the Thioredoxin domain; the sequence is KKVGDSAPDF…YEAVLSHLNK (147 aa). The active-site Cysteine sulfenic acid (-SOH) intermediate is cysteine 60. Cysteines 60 and 94 form a disulfide.

It belongs to the peroxiredoxin family. Tpx subfamily. As to quaternary structure, homodimer.

The catalysed reaction is a hydroperoxide + [thioredoxin]-dithiol = an alcohol + [thioredoxin]-disulfide + H2O. Its function is as follows. Thiol-specific peroxidase that catalyzes the reduction of hydrogen peroxide and organic hydroperoxides to water and alcohols, respectively. Plays a role in cell protection against oxidative stress by detoxifying peroxides. The polypeptide is Thiol peroxidase (Oceanobacillus iheyensis (strain DSM 14371 / CIP 107618 / JCM 11309 / KCTC 3954 / HTE831)).